The following is a 184-amino-acid chain: Photosystem I assembly protein Ycf4 (184 aa).

A run of 2 helical transmembrane segments spans residues asparagine 21–tyrosine 43 and valine 58–leucine 80.

Belongs to the Ycf4 family.

The protein localises to the plastid. Its subcellular location is the chloroplast thylakoid membrane. Functionally, seems to be required for the assembly of the photosystem I complex. In Psilotum nudum (Whisk fern), this protein is Photosystem I assembly protein Ycf4.